We begin with the raw amino-acid sequence, 1078 residues long: MRGKKFISLTLSTMLCLQLLPTASFAAAPATDTGNAGLIAEGDYAIAGNGVRVTYDADGQTITLYRTEGSGLIQMSKPSPLGGPVIGGQEVQDFSHISCDVEQSTSGVMGSGQRMTITSQSMSTGLIRTYVLETSDIEEGVVYTATSYEAGASDVEVSWFIGSVYELYGAEDRIWSYNGGGEGPMHYYDTLQKIDLTDSGKFSRENKQDDTAASIPVSDIYIADGGITVGDASATRREVHTPVQETSDSAQVSIGWPGKVIAAGSVIEIGESFAVVHPGDYYNGLRGYKNAMDHLGVIMPAPGDIPDSSYDLRWESWGWGFNWTIDLIIGKLDELQAAGVKQITLDDGWYTNAGDWALNPEKFPNGASDALRLTDAIHEHGMTALLWWRPCDGGIDSILYQQHPEYFVMDADGRPARLPTPGGGTNPSLGYALCPMADGAIASQVDFVNRAMNDWGFDGFKGDYVWSMPECYNPAHNHASPEESTEKQSEIYRVSYEAMVANDPNVFNLLCNCGTPQDYYSLPYMTQIATADPTSVDQTRRRVKAYKALMGDYFPVTADHNNIWYPSAVGTGSVLIEKRDLSGTAKEEYEKWLGIADTVQLQKGRFIGDLYSYGFDPYETYVVEKDGVMYYAFYKDGSKYSPTGYPDIELKGLDPNKMYRIVDYVNDRVVATNLMGDNAVFNTRFSDYLLVKAVEISEPDPEPVDPDYGFTSVDDRDEALIYTGTWHDDNNASFSEGTARYTNSTDASVVFSFTGTSIRWYGQRDTNFGTAEVYLDDELKTTVDANGAAEAGVCLFEALDLPAAEHTIKIVCKSGVIDIDRFAYEAATLEPIYEKVDALSDRITYVGNWEEYHNSEFYMGNAMRTDEAGAYAELTFRGTAVRLYAEMSFNFGTADVYLDGELVENIILYGQEATGQLMFERTGLEEGEHTIRLVQNAWNINLDYISYLPEQDQPTPPETTVTVDAMDAQLVYTGVWNDDYHDVFQEGTARYASSAGASVEFEFTGSEIRWYGQNDSNFGVASVYIDNEFVQQVNVNGAAAVGKLLFQKADLPAGSHTIRIVCDTPVIDLDYLTYTTNA.

A signal peptide spans 1–26 (MRGKKFISLTLSTMLCLQLLPTASFA). The interval 306–570 (PDSSYDLRWE…NNIWYPSAVG (265 aa)) is glycoside hydrolase 36 domain. Asp-463 serves as the catalytic Nucleophile. Residue Asp-532 is part of the active site. Residues 699–1078 (PDPEPVDPDY…LDYLTYTTNA (380 aa)) are not required for activity on soluble substrates.

Belongs to the glycosyl hydrolase 36 family.

The catalysed reaction is an alpha-D-galactosaminyl-(1-&gt;3)-[alpha-L-fucosyl-(1-&gt;2)]-beta-D-galactosyl derivative + H2O = D-galactosamine + an alpha-L-fucosyl-(1-&gt;2)-beta-D-galactosyl derivative. Its function is as follows. One of an enzyme pair that work together to convert the A antigen to the H antigen of the O blood type, which together release galactosamine. Catalyzes the second step in the conversion, acts on the product of the first reaction (FpGalNAcDeAc, AC P0DTR4). Is specific for galactosamine containing sugars, does not cleave GalNAc residues. The polypeptide is A type blood alpha-D-galactosamine galactosaminidase (Flavonifractor plautii (Fusobacterium plautii)).